The following is a 152-amino-acid chain: Xanthine-guanine phosphoribosyltransferase (152 aa).

5-phospho-alpha-D-ribose 1-diphosphate-binding positions include 37–38 (RG), arginine 69, and 88–96 (DDLVDTGGT). Residue arginine 69 participates in GMP binding. Residue aspartate 89 coordinates Mg(2+). Guanine contacts are provided by aspartate 92 and isoleucine 135. 2 residues coordinate xanthine: aspartate 92 and isoleucine 135. GMP-binding positions include 92–96 (DTGGT) and 134–135 (WI).

This sequence belongs to the purine/pyrimidine phosphoribosyltransferase family. XGPT subfamily. In terms of assembly, homotetramer. Mg(2+) is required as a cofactor.

Its subcellular location is the cell inner membrane. The catalysed reaction is GMP + diphosphate = guanine + 5-phospho-alpha-D-ribose 1-diphosphate. It carries out the reaction XMP + diphosphate = xanthine + 5-phospho-alpha-D-ribose 1-diphosphate. The enzyme catalyses IMP + diphosphate = hypoxanthine + 5-phospho-alpha-D-ribose 1-diphosphate. The protein operates within purine metabolism; GMP biosynthesis via salvage pathway; GMP from guanine: step 1/1. It participates in purine metabolism; XMP biosynthesis via salvage pathway; XMP from xanthine: step 1/1. Its function is as follows. Purine salvage pathway enzyme that catalyzes the transfer of the ribosyl-5-phosphate group from 5-phospho-alpha-D-ribose 1-diphosphate (PRPP) to the N9 position of the 6-oxopurines guanine and xanthine to form the corresponding ribonucleotides GMP (guanosine 5'-monophosphate) and XMP (xanthosine 5'-monophosphate), with the release of PPi. To a lesser extent, also acts on hypoxanthine. This chain is Xanthine-guanine phosphoribosyltransferase, found in Escherichia coli O127:H6 (strain E2348/69 / EPEC).